Consider the following 695-residue polypeptide: DUF724 domain-containing protein 3 (695 aa).

A disordered region spans residues 376–464 (ITVTPLKQQD…GTSDTIRVDD (89 aa)). Positions 384-402 (QDAETEGKKSPKKTPEPVK) are enriched in basic and acidic residues. Residues 434–459 (NQNSNLNETDETCNVSKAGVNGTSDT) are compositionally biased toward polar residues. Residues 509–694 (PFTKNLPFWK…LEFITSVLAP (186 aa)) enclose the DUF724 domain. Positions 614 to 684 (VEERKCLEKR…TIDQEIANVE (71 aa)) form a coiled coil.

As to quaternary structure, homodimer.

May be involved in the polar growth of plant cells via transportation of RNAs. The protein is DUF724 domain-containing protein 3 of Arabidopsis thaliana (Mouse-ear cress).